The chain runs to 363 residues: DNA replication and repair protein RecF (363 aa).

Residue 30-37 (GDNAQGKT) coordinates ATP.

Belongs to the RecF family.

It localises to the cytoplasm. In terms of biological role, the RecF protein is involved in DNA metabolism; it is required for DNA replication and normal SOS inducibility. RecF binds preferentially to single-stranded, linear DNA. It also seems to bind ATP. This is DNA replication and repair protein RecF from Syntrophotalea carbinolica (strain DSM 2380 / NBRC 103641 / GraBd1) (Pelobacter carbinolicus).